The chain runs to 423 residues: F-box/LRR-repeat protein 2 (423 aa).

Residues glycine 9–isoleucine 55 enclose the F-box domain. LRR repeat units follow at residues glutamine 61–glycine 87, cysteine 88–glycine 113, cysteine 114–serine 139, cysteine 140–tryptophan 165, cysteine 166–glycine 191, cysteine 192–serine 217, cysteine 218–glycine 243, cysteine 244–arginine 269, cysteine 270–glutamate 295, cysteine 296–histidine 321, cysteine 322–asparagine 350, cysteine 351–aspartate 375, and cysteine 376–alanine 401. The tract at residues leucine 80–glycine 90 is interaction with Calmodulin. Lysine 201 is covalently cross-linked (Glycyl lysine isopeptide (Lys-Gly) (interchain with G-Cter in ubiquitin)). Phosphothreonine is present on threonine 404. A lipid anchor (S-geranylgeranyl cysteine) is attached at cysteine 420. Residues cysteine 420–leucine 423 carry the CAAX motif motif.

In terms of assembly, part of the SCF (SKP1-CUL1-F-box) E3 ubiquitin-protein ligase complex SCF(FBXL2) composed of CUL1, SKP1, RBX1 and FBXL2. Interacts with calmodulin; may antagonize substrate ubiquitination by SCF(FBXL2). May interact with PIK3R1. Interacts with PTPN13. (Microbial infection) Interacts with hepatitis C virus non-structural protein 5A (NS5A) and less efficiently, with hepatitis C virus non-structural protein 5B (NS5B); a reaction crucial for hepatitis C virus RNA replication. Phosphorylated by GSK-beta (GSK3B), promoting recognition by FBXO3, leading to its ubiquitination by the SCF(FBXO3) complex. In terms of processing, ubiquitinated at Lys-201 by the SCF(FBXO3) complex in response to lipopolysaccharide (LPS), leading to its degradation by the proteasome. As to expression, expressed in brain, heart, kidney, liver, lung, pancreas and placenta.

The protein resides in the membrane. It functions in the pathway protein modification; protein ubiquitination. Its function is as follows. Calcium-activated substrate recognition component of the SCF (SKP1-cullin-F-box protein) E3 ubiquitin-protein ligase complex, SCF(FBXL2), which mediates the ubiquitination and subsequent proteasomal degradation of target proteins. Unlike many F-box proteins, FBXL2 does not seem to target phosphodegron within its substrates but rather calmodulin-binding motifs and is thereby antagonized by calmodulin. This is the case for the cyclins CCND2 and CCND3 which polyubiquitination and subsequent degradation are inhibited by calmodulin. Through CCND2 and CCND3 degradation induces cell-cycle arrest in G(0). SCF(FBXL2) also mediates PIK3R2 ubiquitination and proteasomal degradation thereby regulating phosphatidylinositol 3-kinase signaling and autophagy. PCYT1A monoubiquitination by SCF(FBXL2) and subsequent degradation regulates synthesis of phosphatidylcholine, which is utilized for formation of membranes and of pulmonary surfactant. The SCF(FBXL2) complex acts as a regulator of inflammation by mediating ubiquitination and degradation of TRAF proteins (TRAF1, TRAF2, TRAF3, TRAF4, TRAF5 and TRAF6). The SCF(FBXL2) complex acts as a negative regulator of the NLRP3 inflammasome by mediating ubiquitination and degradation of NLRP3. The protein is F-box/LRR-repeat protein 2 of Homo sapiens (Human).